The following is a 182-amino-acid chain: Large ribosomal subunit protein uL6 (182 aa).

This sequence belongs to the universal ribosomal protein uL6 family. As to quaternary structure, part of the 50S ribosomal subunit.

In terms of biological role, this protein binds to the 23S rRNA, and is important in its secondary structure. It is located near the subunit interface in the base of the L7/L12 stalk, and near the tRNA binding site of the peptidyltransferase center. In Dehalococcoides mccartyi (strain ATCC BAA-2266 / KCTC 15142 / 195) (Dehalococcoides ethenogenes (strain 195)), this protein is Large ribosomal subunit protein uL6.